Reading from the N-terminus, the 350-residue chain is Uroporphyrinogen decarboxylase (350 aa).

Substrate is bound by residues 28–32, Phe-47, Asp-78, Tyr-155, Ser-210, and His-325; that span reads RQAGR.

Belongs to the uroporphyrinogen decarboxylase family. Homodimer.

It is found in the cytoplasm. The catalysed reaction is uroporphyrinogen III + 4 H(+) = coproporphyrinogen III + 4 CO2. It participates in porphyrin-containing compound metabolism; protoporphyrin-IX biosynthesis; coproporphyrinogen-III from 5-aminolevulinate: step 4/4. In terms of biological role, catalyzes the decarboxylation of four acetate groups of uroporphyrinogen-III to yield coproporphyrinogen-III. This chain is Uroporphyrinogen decarboxylase, found in Nostoc sp. (strain PCC 7120 / SAG 25.82 / UTEX 2576).